We begin with the raw amino-acid sequence, 433 residues long: Glutamate-1-semialdehyde 2,1-aminomutase (433 aa).

The residue at position 267 (lysine 267) is an N6-(pyridoxal phosphate)lysine.

This sequence belongs to the class-III pyridoxal-phosphate-dependent aminotransferase family. HemL subfamily. As to quaternary structure, homodimer. The cofactor is pyridoxal 5'-phosphate.

It is found in the cytoplasm. It carries out the reaction (S)-4-amino-5-oxopentanoate = 5-aminolevulinate. The protein operates within porphyrin-containing compound metabolism; protoporphyrin-IX biosynthesis; 5-aminolevulinate from L-glutamyl-tRNA(Glu): step 2/2. This Syntrophobacter fumaroxidans (strain DSM 10017 / MPOB) protein is Glutamate-1-semialdehyde 2,1-aminomutase.